The chain runs to 64 residues: Large ribosomal subunit protein bL33c (64 aa).

This sequence belongs to the bacterial ribosomal protein bL33 family.

It localises to the plastid. It is found in the chloroplast. The chain is Large ribosomal subunit protein bL33c from Phaeodactylum tricornutum (strain CCAP 1055/1).